The sequence spans 120 residues: NAD(P)H-quinone oxidoreductase subunit 3 (120 aa).

A run of 3 helical transmembrane segments spans residues 7–27 (YEYV…ALTA), 64–84 (MFAL…PWAV), and 89–109 (LGLL…VALV).

It belongs to the complex I subunit 3 family. As to quaternary structure, NDH-1 can be composed of about 15 different subunits; different subcomplexes with different compositions have been identified which probably have different functions.

It localises to the cellular thylakoid membrane. It catalyses the reaction a plastoquinone + NADH + (n+1) H(+)(in) = a plastoquinol + NAD(+) + n H(+)(out). The enzyme catalyses a plastoquinone + NADPH + (n+1) H(+)(in) = a plastoquinol + NADP(+) + n H(+)(out). Its function is as follows. NDH-1 shuttles electrons from an unknown electron donor, via FMN and iron-sulfur (Fe-S) centers, to quinones in the respiratory and/or the photosynthetic chain. The immediate electron acceptor for the enzyme in this species is believed to be plastoquinone. Couples the redox reaction to proton translocation, and thus conserves the redox energy in a proton gradient. Cyanobacterial NDH-1 also plays a role in inorganic carbon-concentration. The polypeptide is NAD(P)H-quinone oxidoreductase subunit 3 (Crocosphaera subtropica (strain ATCC 51142 / BH68) (Cyanothece sp. (strain ATCC 51142))).